Here is a 189-residue protein sequence, read N- to C-terminus: Elongation factor P (189 aa).

Lys34 is subject to N6-(3,6-diaminohexanoyl)-5-hydroxylysine.

This sequence belongs to the elongation factor P family. Post-translationally, may be beta-lysylated on the epsilon-amino group of Lys-34 by the combined action of EpmA and EpmB, and then hydroxylated on the C5 position of the same residue by EpmC (if this protein is present). Lysylation is critical for the stimulatory effect of EF-P on peptide-bond formation. The lysylation moiety may extend toward the peptidyltransferase center and stabilize the terminal 3-CCA end of the tRNA. Hydroxylation of the C5 position on Lys-34 may allow additional potential stabilizing hydrogen-bond interactions with the P-tRNA.

The protein localises to the cytoplasm. Its pathway is protein biosynthesis; polypeptide chain elongation. In terms of biological role, involved in peptide bond synthesis. Alleviates ribosome stalling that occurs when 3 or more consecutive Pro residues or the sequence PPG is present in a protein, possibly by augmenting the peptidyl transferase activity of the ribosome. Modification of Lys-34 is required for alleviation. The polypeptide is Elongation factor P (Acinetobacter baumannii (strain AB307-0294)).